We begin with the raw amino-acid sequence, 312 residues long: Ribonuclease Z (312 aa).

Residues H63, H65, D67, H68, H141, D212, and H270 each coordinate Zn(2+). D67 functions as the Proton acceptor in the catalytic mechanism.

The protein belongs to the RNase Z family. As to quaternary structure, homodimer. Zn(2+) is required as a cofactor.

The catalysed reaction is Endonucleolytic cleavage of RNA, removing extra 3' nucleotides from tRNA precursor, generating 3' termini of tRNAs. A 3'-hydroxy group is left at the tRNA terminus and a 5'-phosphoryl group is left at the trailer molecule.. Its function is as follows. Zinc phosphodiesterase, which displays some tRNA 3'-processing endonuclease activity. Probably involved in tRNA maturation, by removing a 3'-trailer from precursor tRNA. In Lactobacillus acidophilus (strain ATCC 700396 / NCK56 / N2 / NCFM), this protein is Ribonuclease Z.